Consider the following 372-residue polypeptide: Queuine tRNA-ribosyltransferase (372 aa).

D92 acts as the Proton acceptor in catalysis. Substrate-binding positions include 92–96 (DSGGF), D146, Q188, and G215. Positions 246 to 252 (GIGTLRE) are RNA binding. The active-site Nucleophile is D265. The tract at residues 270 to 274 (TRLGR) is RNA binding; important for wobble base 34 recognition. Residues C303, C305, C308, and H334 each contribute to the Zn(2+) site.

This sequence belongs to the queuine tRNA-ribosyltransferase family. As to quaternary structure, homodimer. Within each dimer, one monomer is responsible for RNA recognition and catalysis, while the other monomer binds to the replacement base PreQ1. Requires Zn(2+) as cofactor.

The catalysed reaction is 7-aminomethyl-7-carbaguanine + guanosine(34) in tRNA = 7-aminomethyl-7-carbaguanosine(34) in tRNA + guanine. It participates in tRNA modification; tRNA-queuosine biosynthesis. Its function is as follows. Catalyzes the base-exchange of a guanine (G) residue with the queuine precursor 7-aminomethyl-7-deazaguanine (PreQ1) at position 34 (anticodon wobble position) in tRNAs with GU(N) anticodons (tRNA-Asp, -Asn, -His and -Tyr). Catalysis occurs through a double-displacement mechanism. The nucleophile active site attacks the C1' of nucleotide 34 to detach the guanine base from the RNA, forming a covalent enzyme-RNA intermediate. The proton acceptor active site deprotonates the incoming PreQ1, allowing a nucleophilic attack on the C1' of the ribose to form the product. After dissociation, two additional enzymatic reactions on the tRNA convert PreQ1 to queuine (Q), resulting in the hypermodified nucleoside queuosine (7-(((4,5-cis-dihydroxy-2-cyclopenten-1-yl)amino)methyl)-7-deazaguanosine). This is Queuine tRNA-ribosyltransferase from Synechococcus sp. (strain CC9605).